The chain runs to 106 residues: PAT complex subunit Asterix (106 aa).

Over residues 1–10 the composition is skewed to polar residues; that stretch reads MSANSMSDPR. Residues 1–29 are disordered; the sequence is MSANSMSDPRSPNKVLRYKPPPSECNPAL. The residue at position 2 (Ser2) is an N-acetylserine. Topologically, residues 2–32 are cytoplasmic; sequence SANSMSDPRSPNKVLRYKPPPSECNPALDDP. The helical transmembrane segment at 33–51 threads the bilayer; the sequence is TPDYMNLLGMIFSMCGLML. Position 52 (Lys52) is a topological domain, lumenal. A helical transmembrane segment spans residues 53-70; the sequence is LKWCAWVAVYCSFISFAN. The Cytoplasmic portion of the chain corresponds to 71–74; that stretch reads SRSS. The helical transmembrane segment at 75–95 threads the bilayer; it reads EDTKQMMSSFMLSISAVVMSY. Residues 96-106 are Lumenal-facing; it reads LQNPQPMTPPW.

Belongs to the Asterix family. As to quaternary structure, component of the PAT complex, composed of WDR83OS/Asterix and CCDC47. The PAT complex is part of the multi-pass translocon (MPT) complex, composed of three subcomplexes, the GEL complex (composed of RAB5IF/OPTI and TMCO1), the BOS complex (composed of NCLN/Nicalin, NOMO1 and TMEM147) and the PAT complex (composed of WDR83OS/Asterix and CCDC47). The MPT complex associates with the SEC61 complex.

It localises to the endoplasmic reticulum membrane. Component of the multi-pass translocon (MPT) complex that mediates insertion of multi-pass membrane proteins into the lipid bilayer of membranes. The MPT complex takes over after the SEC61 complex: following membrane insertion of the first few transmembrane segments of proteins by the SEC61 complex, the MPT complex occludes the lateral gate of the SEC61 complex to promote insertion of subsequent transmembrane regions. Within the MPT complex, the PAT subcomplex sequesters any highly polar regions in the transmembrane domains away from the non-polar membrane environment until they can be buried in the interior of the fully assembled protein. Within the PAT subcomplex, WDR83OS/Asterix binds to and redirects the substrate to a location behind the SEC61 complex. In Sus scrofa (Pig), this protein is PAT complex subunit Asterix (WDR83OS).